We begin with the raw amino-acid sequence, 185 residues long: MAETAYVPRLRAEYDKSIRSRLTEQFGYVNVMQVPRLDKVVLNMGIGEAVNDRKKAEAAAGDLSLIAGQKAVVTYSRVAISTFKLRENQPIGCKVTLRKTKMYEFIDRLVNVALPRVRDFRGLNPKSFDGRGNYSLGIKEHIIFPEIDFDKVGESWGMDVTVCTTAQTDDEARALLTAFNFPFRQ.

This sequence belongs to the universal ribosomal protein uL5 family. As to quaternary structure, part of the 50S ribosomal subunit; part of the 5S rRNA/L5/L18/L25 subcomplex. Contacts the 5S rRNA and the P site tRNA. Forms a bridge to the 30S subunit in the 70S ribosome.

In terms of biological role, this is one of the proteins that bind and probably mediate the attachment of the 5S RNA into the large ribosomal subunit, where it forms part of the central protuberance. In the 70S ribosome it contacts protein S13 of the 30S subunit (bridge B1b), connecting the 2 subunits; this bridge is implicated in subunit movement. Contacts the P site tRNA; the 5S rRNA and some of its associated proteins might help stabilize positioning of ribosome-bound tRNAs. This Nitrobacter winogradskyi (strain ATCC 25391 / DSM 10237 / CIP 104748 / NCIMB 11846 / Nb-255) protein is Large ribosomal subunit protein uL5.